The chain runs to 329 residues: Peroxidase 51 (329 aa).

Positions 1–25 (MVVMNKTNLLLLILSLFLAINLSSA) are cleaved as a signal peptide. Disulfide bonds link Cys36–Cys119, Cys69–Cys74, Cys125–Cys325, and Cys204–Cys236. His67 functions as the Proton acceptor in the catalytic mechanism. Residues Asp68, Val71, Gly73, Asp75, and Ser77 each coordinate Ca(2+). Residue Pro167 coordinates substrate. Residue His197 participates in heme b binding. Thr198 contacts Ca(2+). The N-linked (GlcNAc...) asparagine glycan is linked to Asn215. Ca(2+) is bound by residues Asp249, Thr252, and Asp257.

It belongs to the peroxidase family. Classical plant (class III) peroxidase subfamily. It depends on heme b as a cofactor. Ca(2+) is required as a cofactor.

Its subcellular location is the secreted. It catalyses the reaction 2 a phenolic donor + H2O2 = 2 a phenolic radical donor + 2 H2O. Functionally, removal of H(2)O(2), oxidation of toxic reductants, biosynthesis and degradation of lignin, suberization, auxin catabolism, response to environmental stresses such as wounding, pathogen attack and oxidative stress. These functions might be dependent on each isozyme/isoform in each plant tissue. The protein is Peroxidase 51 (PER51) of Arabidopsis thaliana (Mouse-ear cress).